The following is a 304-amino-acid chain: UDP-3-O-acyl-N-acetylglucosamine deacetylase (304 aa).

Zn(2+) is bound by residues His-78, His-237, and Asp-241. Residue His-264 is the Proton donor of the active site.

Belongs to the LpxC family. The cofactor is Zn(2+).

It carries out the reaction a UDP-3-O-[(3R)-3-hydroxyacyl]-N-acetyl-alpha-D-glucosamine + H2O = a UDP-3-O-[(3R)-3-hydroxyacyl]-alpha-D-glucosamine + acetate. It functions in the pathway glycolipid biosynthesis; lipid IV(A) biosynthesis; lipid IV(A) from (3R)-3-hydroxytetradecanoyl-[acyl-carrier-protein] and UDP-N-acetyl-alpha-D-glucosamine: step 2/6. Functionally, catalyzes the hydrolysis of UDP-3-O-myristoyl-N-acetylglucosamine to form UDP-3-O-myristoylglucosamine and acetate, the committed step in lipid A biosynthesis. The protein is UDP-3-O-acyl-N-acetylglucosamine deacetylase of Polynucleobacter asymbioticus (strain DSM 18221 / CIP 109841 / QLW-P1DMWA-1) (Polynucleobacter necessarius subsp. asymbioticus).